The chain runs to 195 residues: MGSRASTLLRDEELEEIKKETGFSHSQITRLYSRFTSLDKGENGTLSREDFQRIPELAINPLGDRIINAFFSEGEDQVNFRGFMRTLAHFRPIEDNEKSKDVNGPEPLNSRSNKLHFAFRLYDLDKDDKISRDELLQVLRMMVGVNISDEQLGSIADRTIQEADQDGDSAISFTEFVKVLEKVDVEQKMSIRFLH.

The N-myristoyl glycine moiety is linked to residue Gly-2. A Necessary for association with microtubule and interaction with GAPDH motif is present at residues 2–6; sequence GSRAS. 4 EF-hand domains span residues 26–61, 71–106, 110–145, and 151–186; these read SQIT…AINP, FSEG…NGPE, SRSN…MVGV, and QLGS…VDVE. Residues Asp-123, Asp-125, Asp-127, Lys-129, and Glu-134 each coordinate Ca(2+). The Nuclear export signal 1 motif lies at 138-147; it reads VLRMMVGVNI. Residues Asp-164, Asp-166, Asp-168, and Glu-175 each contribute to the Ca(2+) site. The Nuclear export signal 2 signature appears at 176–185; sequence FVKVLEKVDV.

This sequence belongs to the calcineurin regulatory subunit family. CHP subfamily. Monomer. Interacts with STK17B; the interaction occurs in a calcium-independent manner and induces the translocation of CHP1 from the Golgi to the nucleus. Interacts with GAPDH; the interaction is direct, occurs in a N-myristoylation-dependent manner and facilitates the ability of CHP1 to bind microtubules. Interacts with KIF1B (via the C-terminal end of the kinesin-motor domain); the interaction occurs in a calcium-dependent manner. Associates (via C-terminal domain) with microtubules; the association occurs with polymerized microtubules during the cell cycle in a myristoylation- and calcium-independent manner and is enhanced by GAPDH. Interacts with PPP3CA. Interacts with SLC9A1/NHE1 (via the cytoplasmic C-terminal domain); the interaction occurs at the plasma membrane in a calcium-dependent manner and at a domain that is critical for growth factor stimulation of the exchanger. Interacts with SLC9A3; increases SLC9A3 trafficking and activity at the plasma membrane. Post-translationally, phosphorylated; decreased phosphorylation is associated with an increase in SLC9A1/NHE1 Na(+)/H(+) exchange activity. Phosphorylation occurs in serum-dependent manner. The phosphorylation state may regulate the binding to SLC9A1/NHE1. In terms of processing, both N-myristoylation and calcium-mediated conformational changes are essential for its function in exocytic traffic. N-myristoylation is required for its association with microtubules and interaction with GAPDH, but not for the constitutive association to membranes.

It localises to the nucleus. It is found in the cytoplasm. The protein resides in the cytoskeleton. The protein localises to the endomembrane system. Its subcellular location is the endoplasmic reticulum-Golgi intermediate compartment. It localises to the endoplasmic reticulum. It is found in the cell membrane. The protein resides in the membrane. Its function is as follows. Calcium-binding protein involved in different processes such as regulation of vesicular trafficking, plasma membrane Na(+)/H(+) exchanger and gene transcription. Involved in the constitutive exocytic membrane traffic. Mediates the association between microtubules and membrane-bound organelles of the endoplasmic reticulum and Golgi apparatus and is also required for the targeting and fusion of transcytotic vesicles (TCV) with the plasma membrane. Functions as an integral cofactor in cell pH regulation by controlling plasma membrane-type Na(+)/H(+) exchange activity. Affects the pH sensitivity of SLC9A1/NHE1 by increasing its sensitivity at acidic pH. Required for the stabilization and localization of SLC9A1/NHE1 at the plasma membranes. Inhibits serum- and GTPase-stimulated Na(+)/H(+) exchange. Plays a role as an inhibitor of ribosomal RNA transcription by repressing the nucleolar UBF1 transcriptional activity. May sequester UBF1 in the nucleoplasm and limit its translocation to the nucleolus. Associates to the ribosomal gene promoter. Acts as a negative regulator of the calcineurin/NFAT signaling pathway. Inhibits NFAT nuclear translocation and transcriptional activity by suppressing the calcium-dependent calcineurin phosphatase activity. Also negatively regulates the kinase activity of the apoptosis-induced kinase STK17B. Inhibits both STK17B auto- and substrate-phosphorylations in a calcium-dependent manner. In Mus musculus (Mouse), this protein is Calcineurin B homologous protein 1 (Chp1).